A 421-amino-acid chain; its full sequence is Shaggy-related protein kinase kappa (421 aa).

The span at 1–10 (MASSGLGNGV) shows a compositional bias: gly residues. The segment at 1–60 (MASSGLGNGVGTSRSAKGLKSSSSSVDWLTRDLAETRIRDKVETDDERDSEPDIIDGAGA) is disordered. Residues 29 to 42 (LTRDLAETRIRDKV) are compositionally biased toward basic and acidic residues. Over residues 43 to 54 (ETDDERDSEPDI) the composition is skewed to acidic residues. The Protein kinase domain occupies 83–367 (YISEHVVGTG…ALEACIHPLF (285 aa)). Residues 89-97 (VGTGSFGMV) and Lys-112 each bind ATP. Asp-208 acts as the Proton acceptor in catalysis. The residue at position 243 (Tyr-243) is a Phosphotyrosine.

Belongs to the protein kinase superfamily. CMGC Ser/Thr protein kinase family. GSK-3 subfamily. In terms of processing, autophosphorylated mainly on threonine and serine residues. Expressed exclusively in inflorescences.

It carries out the reaction L-seryl-[protein] + ATP = O-phospho-L-seryl-[protein] + ADP + H(+). It catalyses the reaction L-threonyl-[protein] + ATP = O-phospho-L-threonyl-[protein] + ADP + H(+). In terms of biological role, may mediate extracellular signals to regulate transcription in differentiating cells. In Arabidopsis thaliana (Mouse-ear cress), this protein is Shaggy-related protein kinase kappa (ASK10).